A 225-amino-acid chain; its full sequence is Enolase-phosphatase E1 (225 aa).

It belongs to the HAD-like hydrolase superfamily. MasA/MtnC family. As to quaternary structure, monomer. Mg(2+) is required as a cofactor.

The enzyme catalyses 5-methylsulfanyl-2,3-dioxopentyl phosphate + H2O = 1,2-dihydroxy-5-(methylsulfanyl)pent-1-en-3-one + phosphate. Its pathway is amino-acid biosynthesis; L-methionine biosynthesis via salvage pathway; L-methionine from S-methyl-5-thio-alpha-D-ribose 1-phosphate: step 3/6. It functions in the pathway amino-acid biosynthesis; L-methionine biosynthesis via salvage pathway; L-methionine from S-methyl-5-thio-alpha-D-ribose 1-phosphate: step 4/6. Its function is as follows. Bifunctional enzyme that catalyzes the enolization of 2,3-diketo-5-methylthiopentyl-1-phosphate (DK-MTP-1-P) into the intermediate 2-hydroxy-3-keto-5-methylthiopentenyl-1-phosphate (HK-MTPenyl-1-P), which is then dephosphorylated to form the acireductone 1,2-dihydroxy-3-keto-5-methylthiopentene (DHK-MTPene). The protein is Enolase-phosphatase E1 of Shewanella piezotolerans (strain WP3 / JCM 13877).